We begin with the raw amino-acid sequence, 91 residues long: Defensin-like protein 95 (91 aa).

The first 27 residues, 1 to 27, serve as a signal peptide directing secretion; it reads MGSLKLSTFAIVVCLSILLISPIEVNG. 4 disulfides stabilise this stretch: Cys31/Cys76, Cys38/Cys63, Cys47/Cys73, and Cys51/Cys75.

The protein belongs to the DEFL family.

The protein localises to the secreted. The polypeptide is Defensin-like protein 95 (Arabidopsis thaliana (Mouse-ear cress)).